The sequence spans 208 residues: Small ribosomal subunit protein uS4 (208 aa).

Residues 98–161 (QRLDNVVYRM…KNNPQIVRAI (64 aa)) form the S4 RNA-binding domain.

This sequence belongs to the universal ribosomal protein uS4 family. Part of the 30S ribosomal subunit. Contacts protein S5. The interaction surface between S4 and S5 is involved in control of translational fidelity.

Its function is as follows. One of the primary rRNA binding proteins, it binds directly to 16S rRNA where it nucleates assembly of the body of the 30S subunit. In terms of biological role, with S5 and S12 plays an important role in translational accuracy. The protein is Small ribosomal subunit protein uS4 of Campylobacter concisus (strain 13826).